Reading from the N-terminus, the 304-residue chain is Putative F-box/LRR-repeat protein 21 (304 aa).

An F-box domain is found at 43 to 90 (RRNWVDLPPELTTSILLRLSLTDILDNAQKVCKEWRRICKDPSMWRKI). LRR repeat units lie at residues 132–159 (LSYITDRNLRSLGLGMCFPRVTKLGVVN), 173–198 (THSCIKLDLKAIGHACPQLKTLKLNS), 218–241 (GPLECDDDALAIAESMPKLHHLQL), and 243–268 (ANRLTNTGLNAILDGCPHLEHLDVRK).

The polypeptide is Putative F-box/LRR-repeat protein 21 (FBL21) (Arabidopsis thaliana (Mouse-ear cress)).